A 216-amino-acid chain; its full sequence is Vascular endothelial growth factor A (216 aa).

The signal sequence occupies residues 1–26; sequence MNFLLTWIHWGLAALLYLQSAELSKA. 3 disulfide bridges follow: C52-C94, C83-C128, and C87-C130. N101 carries an N-linked (GlcNAc...) asparagine glycan. Residues 132–141 are compositionally biased toward basic and acidic residues; sequence PKKDVKNKQE. The segment at 132-167 is disordered; the sequence is PKKDVKNKQEKKSKRGKGKGQKRKRKKGRYKPPSFH. Residues 142–161 are compositionally biased toward basic residues; that stretch reads KKSKRGKGKGQKRKRKKGRY.

This sequence belongs to the PDGF/VEGF growth factor family. In terms of assembly, homodimer; disulfide-linked. Also found as heterodimer with PGF.

Functionally, growth factor active in angiogenesis, vasculogenesis and endothelial cell growth. Induces endothelial cell proliferation, promotes cell migration, inhibits apoptosis and induces permeabilization of blood vessels. Binds to the FLT1/VEGFR1 and KDR/VEGFR2 receptors, heparan sulfate and heparin. This is Vascular endothelial growth factor A (VEGFA) from Gallus gallus (Chicken).